The sequence spans 243 residues: Large ribosomal subunit protein uL2 (243 aa).

The interval 198–243 (VDHPFGGGGRQHPGKPKSVSRDTPPGRKVGDIASKRTGRGGKGGQE) is disordered. Basic and acidic residues predominate over residues 221 to 231 (PPGRKVGDIAS).

The protein belongs to the universal ribosomal protein uL2 family. Part of the 50S ribosomal subunit. Forms a bridge to the 30S subunit in the 70S ribosome.

Functionally, one of the primary rRNA binding proteins. Required for association of the 30S and 50S subunits to form the 70S ribosome, for tRNA binding and peptide bond formation. It has been suggested to have peptidyltransferase activity; this is somewhat controversial. Makes several contacts with the 16S rRNA in the 70S ribosome. This Natronomonas pharaonis (strain ATCC 35678 / DSM 2160 / CIP 103997 / JCM 8858 / NBRC 14720 / NCIMB 2260 / Gabara) (Halobacterium pharaonis) protein is Large ribosomal subunit protein uL2.